Reading from the N-terminus, the 983-residue chain is Probable beta-galactosidase C (983 aa).

The N-terminal stretch at 1–23 is a signal peptide; that stretch reads MRIFSFLFLLLLGILTGQGLVSG. Residues tyrosine 82, asparagine 127, alanine 128, glutamate 129, and asparagine 187 each coordinate substrate. The active-site Proton donor is glutamate 188. A glycan (N-linked (GlcNAc...) asparagine) is linked at asparagine 197. Position 251 (tyrosine 251) interacts with substrate. A disulfide bond links cysteine 257 and cysteine 304. Asparagine 276 carries N-linked (GlcNAc...) asparagine glycosylation. Glutamate 287 functions as the Nucleophile in the catalytic mechanism. Tyrosine 353 lines the substrate pocket. Asparagine 391, asparagine 434, asparagine 466, asparagine 516, asparagine 601, asparagine 676, asparagine 714, asparagine 719, and asparagine 804 each carry an N-linked (GlcNAc...) asparagine glycan.

It belongs to the glycosyl hydrolase 35 family.

The protein resides in the secreted. It catalyses the reaction Hydrolysis of terminal non-reducing beta-D-galactose residues in beta-D-galactosides.. Its function is as follows. Cleaves beta-linked terminal galactosyl residues from gangliosides, glycoproteins, and glycosaminoglycans. In Neosartorya fischeri (strain ATCC 1020 / DSM 3700 / CBS 544.65 / FGSC A1164 / JCM 1740 / NRRL 181 / WB 181) (Aspergillus fischerianus), this protein is Probable beta-galactosidase C (lacC).